The primary structure comprises 99 residues: Putative gene 45 protein (99 aa).

In Bacillus phage SP01 (Bacteriophage SP01), this protein is Putative gene 45 protein (45).